Consider the following 729-residue polypeptide: Phenylalanine ammonia-lyase (729 aa).

Residue tyrosine 77 is the Proton donor/acceptor of the active site. The 5-imidazolinone (Ala-Gly) cross-link spans 182 to 184; sequence ASG. Serine 183 carries the post-translational modification 2,3-didehydroalanine (Ser). (E)-cinnamate-binding residues include asparagine 241, glutamine 336, arginine 342, asparagine 372, lysine 443, glutamate 471, and asparagine 474.

This sequence belongs to the PAL/histidase family. Post-translationally, contains an active site 4-methylidene-imidazol-5-one (MIO), which is formed autocatalytically by cyclization and dehydration of residues Ala-Ser-Gly.

It localises to the cytoplasm. It carries out the reaction L-phenylalanine = (E)-cinnamate + NH4(+). It functions in the pathway secondary metabolite biosynthesis. The protein operates within phenylpropanoid metabolism; trans-cinnamate biosynthesis; trans-cinnamate from L-phenylalanine: step 1/1. In terms of biological role, phenylalanine ammonia-lyase; part of the gene cluster that mediates the biosynthesis of squalestatin S1 (SQS1, also known as zaragozic acid A), a heavily oxidized fungal polyketide that offers potent cholesterol lowering activity by targeting squalene synthase (SS). SQS1 is composed of a 2,8-dioxobicyclic[3.2.1]octane-3,4,5-tricarboxyclic acid core that is connected to two lipophilic polyketide arms. These initial steps feature the priming of an unusual benzoic acid starter unit onto the highly reducing polyketide synthase pks2, followed by oxaloacetate extension and product release to generate a tricarboxylic acid containing product. The phenylalanine ammonia lyase (PAL) M7 and the acyl-CoA ligase M9 are involved in transforming phenylalanine into benzoyl-CoA. The citrate synthase-like protein R3 is involved in connecting the C-alpha-carbons of the hexaketide chain and oxaloacetate to afford the tricarboxylic acid unit. The potential hydrolytic enzymes, M8 and M10, are in close proximity to pks2 and may participate in product release. On the other side, the tetraketide arm is synthesized by a the squalestatin tetraketide synthase pks1 and enzymatically esterified to the core in the last biosynthetic step, by the acetyltransferase M4. The biosynthesis of the tetraketide must involve 3 rounds of chain extension. After the first and second rounds methyl-transfer occurs, and in all rounds of extension the ketoreductase and dehydratase are active. The enoyl reductase and C-MeT of pks1 are not active in the final round of extension. The acetyltransferase M4 appears to have a broad substrate selectivity for its acyl CoA substrate, allowing the in vitro synthesis of novel squalestatins. The biosynthesis of SQS1 requires several oxidative steps likely performed by oxidoreductases M1, R1 and R2. Finally, in support of the identification of the cluster as being responsible for SQS1 production, the cluster contains a gene encoding a putative squalene synthase (SS) R6, suggesting a likely mechanism for self-resistance. The polypeptide is Phenylalanine ammonia-lyase (Phoma sp. (strain ATCC 20986 / MF5453)).